A 352-amino-acid chain; its full sequence is MTLFNFIKLFKKAHEENVKQADLEKKKAMKQIDLRRANDTEIMLTKVNIPLADMMAAVLGMDEYVLDVDQIENLIRFCPTKEEMELLKNYTGDKATLGKCEQYFLEVMKVPGVESKLRAFSFKIQFGTQIAELNKGLNAVNSACEEVRTSEKLKEIMANILCMGNILNQGTAEGSAVGFKLKSLLILSDTCAPNSKMTLMHYLCKVLASKASDLLDFHKDLESLESASKIQLKSLAEEIQAITKGLEKLNKQLTASESDGPVSQVFRKVLKDFISMAETQVATVSSLYSSGKNADALAHYFGEDPNHYPFEKVTTTLLSFIRLFKKAHEENVKQADLDKNKDAKEAEMEKTK.

An FH2 domain is found at 1 to 350 (MTLFNFIKLF…KDAKEAEMEK (350 aa)).

This sequence belongs to the formin-like family. Class-II subfamily.

The sequence is that of Putative formin-like protein 15b (FH15B) from Arabidopsis thaliana (Mouse-ear cress).